A 648-amino-acid polypeptide reads, in one-letter code: 1-deoxy-D-xylulose-5-phosphate synthase (648 aa).

Thiamine diphosphate contacts are provided by residues H79 and 120–122 (GHA). Mg(2+) is bound at residue D152. Thiamine diphosphate-binding positions include 153–154 (GS), N181, F293, and E377. N181 serves as a coordination point for Mg(2+).

The protein belongs to the transketolase family. DXPS subfamily. As to quaternary structure, homodimer. Mg(2+) serves as cofactor. The cofactor is thiamine diphosphate.

It catalyses the reaction D-glyceraldehyde 3-phosphate + pyruvate + H(+) = 1-deoxy-D-xylulose 5-phosphate + CO2. It functions in the pathway metabolic intermediate biosynthesis; 1-deoxy-D-xylulose 5-phosphate biosynthesis; 1-deoxy-D-xylulose 5-phosphate from D-glyceraldehyde 3-phosphate and pyruvate: step 1/1. Functionally, catalyzes the acyloin condensation reaction between C atoms 2 and 3 of pyruvate and glyceraldehyde 3-phosphate to yield 1-deoxy-D-xylulose-5-phosphate (DXP). The sequence is that of 1-deoxy-D-xylulose-5-phosphate synthase from Bacteroides fragilis (strain ATCC 25285 / DSM 2151 / CCUG 4856 / JCM 11019 / LMG 10263 / NCTC 9343 / Onslow / VPI 2553 / EN-2).